The chain runs to 62 residues: uncharacterized protein (62 aa).

2 helical membrane passes run 7–27 (LLLL…VFIA) and 34–51 (IIAS…GFTL).

It localises to the cell membrane. This is an uncharacterized protein from Bacillus subtilis (strain 168).